The primary structure comprises 767 residues: MAFKGEHRAILIANILIVVAISIFSSGFFPYKSLLPGLATFAETNIGTVAPKVFDRVIFMVIDALRSDFVYSKTSGFSFTQSLIRSGAALPFTAHASSPTVTMPRLKAMTTGSVPSFLDVILNIAESDTSSTLAYQDTWLAQIKAQGGQLVMYGDDTWIKLFPGVFDRCDGTTSFFVSDFTEVDHNVTRHVPRELSERDWSAFIMHFLGLDHIGHKAGPKSRHMMTKQREMDSIVALIYAAMEEQEHLQSTLFVLCGDHGMNDAGNHGGSSPGEISPALLFISPKFQTKTTPEDSPVEAFSDLQYYRTVEQVDITPTLAGLLGLPIPLNSLGVFIPEFLMMWDNDAHRIDILLRNAKQMLSAMKGTFPDLDVEAITPPHGCDKHVLRSAQDVMSSTASKYNTTRLYLGLFVAALAVLLSFFPAYGLGSKYSYAVTFLMLIIISYGGMMFASSYVEEEQQFWYWVVTAWTVYLHIKSLRPWHGSKDTRRWNQTGQKFAAEPDIARDFFPRHQNILWALIILTYFDTCMHLCLNSHSSNIWRSAAILTTIAAFFFKLVFVASDSPELLYESLLSPIQKSLEEMPLVPPARLSKAVNIPIFLMFRLQAIILDFLKMSAIEVTLTSLLSQNMTFFAFGGSNAISSVDLSNAYNGIGSYSVVLVGVLTFISNWAGPIWWASAARLLYSNPTFAERYGQRTLLTFHAATSLMSVMAACTMLRTHLFIWTVFSPKYLYTLAWTILNHMFINLPATANVSQVLNWQYAFHSVACR.

N-linked (GlcNAc...) asparagine glycans are attached at residues Asn186 and Asn401. 2 helical membrane-spanning segments follow: residues 407–427 (LGLFVAALAVLLSFFPAYGLG) and 434–454 (VTFLMLIIISYGGMMFASSYV). Asn490 carries N-linked (GlcNAc...) asparagine glycosylation. The next 3 helical transmembrane spans lie at 513–533 (ILWALIILTYFDTCMHLCLNS), 538–558 (IWRSAAILTTIAAFFFKLVFV), and 595–615 (IPIFLMFRLQAIILDFLKMSA). A glycan (N-linked (GlcNAc...) asparagine) is linked at Asn627. 3 helical membrane-spanning segments follow: residues 655–675 (SVVLVGVLTFISNWAGPIWWA), 695–715 (TLLTFHAATSLMSVMAACTML), and 733–755 (LAWTILNHMFINLPATANVSQVL).

It belongs to the PIGG/PIGN/PIGO family. PIGG subfamily.

Its subcellular location is the endoplasmic reticulum membrane. Its pathway is glycolipid biosynthesis; glycosylphosphatidylinositol-anchor biosynthesis. Its function is as follows. Ethanolamine phosphate transferase involved in glycosylphosphatidylinositol-anchor biosynthesis. Transfers ethanolamine phosphate to the GPI second mannose. The sequence is that of GPI ethanolamine phosphate transferase 2 (las21) from Aspergillus fumigatus (strain ATCC MYA-4609 / CBS 101355 / FGSC A1100 / Af293) (Neosartorya fumigata).